A 297-amino-acid polypeptide reads, in one-letter code: Probable esterase afoC (297 aa).

S136 (charge relay system) is an active-site residue. A compositionally biased stretch (low complexity) spans 204 to 217 (ASSSASASVSGSES). The tract at residues 204-226 (ASSSASASVSGSESAGEEEEDGH) is disordered. Catalysis depends on charge relay system residues D240 and H267.

It belongs to the LovG family.

Its function is as follows. Probable esterase; part of the gene cluster that mediates the biosynthesis of asperfuranone, a probable antitumor agent. The polyketide synthase afoG is responsible for producing the 3,5-dimethyloctadienone moiety from acetyl-CoA, three malonyl-CoA, and two S-adenosyl methionines (SAM). The 3,5-dimethyloctadienone moiety is then loaded onto the SAT domain of afoE and extended with four malonyl-CoA and one SAM, which leads to the formation of 2,4-dihydroxy-6-(5,7-dimethyl-2-oxo-trans-3-trans-5-nonadienyl)-3-methylbenzaldehyde (compound 2) after reductive release and aldol condensation. AfoD is the next enzyme in the biosynthesis sequence and hydroxylates the side chain at the benzylic position of compound 2. After benzylic hydroxylation, a furan ring is formed after five-member ring hemiacetal formation and water elimination. AfoF and afoC are proposed to oxidize the R-diketone proton and to reduce the unconjugated carbonyl group, respectively, to generate asperfuranone. Since no intermediates could be isolated from afoF and afoC deletants, the sequence of these two enzymes is not fully understood. Moreover, since afoC deletant still produces a small amount of asperfuranone, other endogenous oxidoreductases might catalyze the same reaction with much less efficiency. In Emericella nidulans (strain FGSC A4 / ATCC 38163 / CBS 112.46 / NRRL 194 / M139) (Aspergillus nidulans), this protein is Probable esterase afoC.